Consider the following 291-residue polypeptide: Tyrosine recombinase XerD (291 aa).

In terms of domain architecture, Core-binding (CB) spans 1–82 (MEEGLIDRLL…ACKRLYIWME (82 aa)). Residues 103-285 (NIPTLITEQQ…ANVWLQGVVK (183 aa)) form the Tyr recombinase domain. Catalysis depends on residues Arg143, Lys167, His237, Arg240, and His263. The active-site O-(3'-phospho-DNA)-tyrosine intermediate is the Tyr272.

The protein belongs to the 'phage' integrase family. XerD subfamily. As to quaternary structure, forms a cyclic heterotetrameric complex composed of two molecules of XerC and two molecules of XerD.

The protein localises to the cytoplasm. Its function is as follows. Site-specific tyrosine recombinase, which acts by catalyzing the cutting and rejoining of the recombining DNA molecules. The XerC-XerD complex is essential to convert dimers of the bacterial chromosome into monomers to permit their segregation at cell division. It also contributes to the segregational stability of plasmids. The sequence is that of Tyrosine recombinase XerD from Neisseria meningitidis serogroup B (strain ATCC BAA-335 / MC58).